The sequence spans 146 residues: Snaclec echicetin subunit beta (146 aa).

Residues 1–23 (MGRFISVSFGLLVLLLSLSGTGA) form the signal peptide. Intrachain disulfides connect Cys25-Cys36, Cys53-Cys142, and Cys119-Cys134. The 112-residue stretch at 32 to 143 (YEGYCYKVFK…CTWTFSFVCK (112 aa)) folds into the C-type lectin domain.

Belongs to the snaclec family. As to quaternary structure, heterodimer of subunits alpha and beta; disulfide-linked. Expressed by the venom gland.

The protein resides in the secreted. In terms of biological role, binding of echicetin to glycoprotein Ibalpha (GP1BA) receptor on platelets alone results in inhibition of platelet aggregation, while binding to both GPIba receptor and IgMk promotes platelet aggregation and signal transduction. The sequence is that of Snaclec echicetin subunit beta from Echis carinatus (Saw-scaled viper).